The chain runs to 264 residues: ATP synthase subunit a (264 aa).

Transmembrane regions (helical) follow at residues 27 to 47 (VHLD…FVFS), 87 to 107 (VGPL…IDLI), 131 to 151 (DISG…FYTI), 172 to 192 (LLIP…PVSL), 196 to 216 (LFGN…MYMA), and 230 to 250 (LAWA…FMML).

This sequence belongs to the ATPase A chain family. F-type ATPases have 2 components, CF(1) - the catalytic core - and CF(0) - the membrane proton channel. CF(1) has five subunits: alpha(3), beta(3), gamma(1), delta(1), epsilon(1). CF(0) has three main subunits: a(1), b(2) and c(9-12). The alpha and beta chains form an alternating ring which encloses part of the gamma chain. CF(1) is attached to CF(0) by a central stalk formed by the gamma and epsilon chains, while a peripheral stalk is formed by the delta and b chains.

It is found in the cell inner membrane. Key component of the proton channel; it plays a direct role in the translocation of protons across the membrane. This Pasteurella multocida (strain Pm70) protein is ATP synthase subunit a.